The following is a 1605-amino-acid chain: Pentafunctional AROM polypeptide (1605 aa).

The 3-dehydroquinate synthase stretch occupies residues 1–384 (MTGPTKISIL…YEPRASVVPN (384 aa)). NAD(+) is bound by residues 44–46 (DTN), 81–84 (EVSK), 114–116 (GGV), and Asp119. 7-phospho-2-dehydro-3-deoxy-D-arabino-heptonate is bound at residue Arg130. Residue 139–140 (TT) participates in NAD(+) binding. Asp146 and Lys152 together coordinate 7-phospho-2-dehydro-3-deoxy-D-arabino-heptonate. Lys161 is an NAD(+) binding site. Residue Asn162 participates in 7-phospho-2-dehydro-3-deoxy-D-arabino-heptonate binding. NAD(+)-binding positions include 179–182 (FLET) and Asn190. A Zn(2+)-binding site is contributed by Glu194. Residues 194–197 (EVIK) and Lys250 each bind 7-phospho-2-dehydro-3-deoxy-D-arabino-heptonate. Glu260 (proton acceptor; for 3-dehydroquinate synthase activity) is an active-site residue. Residues 264 to 268 (RNLLN) and His271 each bind 7-phospho-2-dehydro-3-deoxy-D-arabino-heptonate. Zn(2+) is bound at residue His271. His275 functions as the Proton acceptor; for 3-dehydroquinate synthase activity in the catalytic mechanism. 2 residues coordinate 7-phospho-2-dehydro-3-deoxy-D-arabino-heptonate: His287 and Lys356. Residue His287 coordinates Zn(2+). An EPSP synthase region spans residues 397-842 (VHPGVSTTSE…WDTLRQKFAV (446 aa)). The active-site For EPSP synthase activity is the Cys824. Residues 864 to 1055 (SASVFIIGMR…KKKQHSFFVS (192 aa)) are shikimate kinase. 871–878 (GMRGAGKT) provides a ligand contact to ATP. The 3-dehydroquinase stretch occupies residues 1056–1276 (LTLPDVRGAD…AAPGQLSATD (221 aa)). His1179 serves as the catalytic Proton acceptor; for 3-dehydroquinate dehydratase activity. Lys1207 acts as the Schiff-base intermediate with substrate; for 3-dehydroquinate dehydratase activity in catalysis. The interval 1289–1605 (KKRFALFGSP…LSGRTMLTCS (317 aa)) is shikimate dehydrogenase.

It in the N-terminal section; belongs to the sugar phosphate cyclases superfamily. Dehydroquinate synthase family. In the 2nd section; belongs to the EPSP synthase family. The protein in the 3rd section; belongs to the shikimate kinase family. This sequence in the 4th section; belongs to the type-I 3-dehydroquinase family. It in the C-terminal section; belongs to the shikimate dehydrogenase family. As to quaternary structure, homodimer. It depends on Zn(2+) as a cofactor.

It localises to the cytoplasm. The enzyme catalyses 7-phospho-2-dehydro-3-deoxy-D-arabino-heptonate = 3-dehydroquinate + phosphate. The catalysed reaction is 3-dehydroquinate = 3-dehydroshikimate + H2O. It carries out the reaction shikimate + NADP(+) = 3-dehydroshikimate + NADPH + H(+). It catalyses the reaction shikimate + ATP = 3-phosphoshikimate + ADP + H(+). The enzyme catalyses 3-phosphoshikimate + phosphoenolpyruvate = 5-O-(1-carboxyvinyl)-3-phosphoshikimate + phosphate. Its pathway is metabolic intermediate biosynthesis; chorismate biosynthesis; chorismate from D-erythrose 4-phosphate and phosphoenolpyruvate: step 2/7. The protein operates within metabolic intermediate biosynthesis; chorismate biosynthesis; chorismate from D-erythrose 4-phosphate and phosphoenolpyruvate: step 3/7. It participates in metabolic intermediate biosynthesis; chorismate biosynthesis; chorismate from D-erythrose 4-phosphate and phosphoenolpyruvate: step 4/7. It functions in the pathway metabolic intermediate biosynthesis; chorismate biosynthesis; chorismate from D-erythrose 4-phosphate and phosphoenolpyruvate: step 5/7. Its pathway is metabolic intermediate biosynthesis; chorismate biosynthesis; chorismate from D-erythrose 4-phosphate and phosphoenolpyruvate: step 6/7. In terms of biological role, the AROM polypeptide catalyzes 5 consecutive enzymatic reactions in prechorismate polyaromatic amino acid biosynthesis. The sequence is that of Pentafunctional AROM polypeptide from Aspergillus fumigatus (strain CBS 144.89 / FGSC A1163 / CEA10) (Neosartorya fumigata).